Consider the following 65-residue polypeptide: ITYTDCTESGQNLCLCEGSNVCGKGNKCILGSNGEENQCVTGEGTPKPQSHNDGDFEEIPEEYLQ.

The interaction with thrombin active site stretch occupies residues 1-3 (ITY). Disulfide bonds link C6–C14, C16–C28, and C22–C39. The interval 39 to 65 (CVTGEGTPKPQSHNDGDFEEIPEEYLQ) is disordered. T45 carries an O-linked (GalNAc...) threonine glycan. The segment at 55–65 (DFEEIPEEYLQ) is interaction with fibrinogen-binding exosite of thrombin. Positions 55 to 65 (DFEEIPEEYLQ) are enriched in acidic residues. The residue at position 63 (Y63) is a Sulfotyrosine.

Belongs to the protease inhibitor I14 (hirudin) family.

The protein resides in the secreted. Hirudin is a potent thrombin-specific protease inhibitor. It forms a stable non-covalent complex with alpha-thrombin, thereby abolishing its ability to cleave fibrinogen. In Hirudo medicinalis (Medicinal leech), this protein is Hirudin-2B.